The primary structure comprises 277 residues: Membrane protein insertase YidC 2 (277 aa).

The signal sequence occupies residues 1–22; it reads MKKYRKILAMLAVLAIVLVLSG. Cysteine 23 carries the N-palmitoyl cysteine lipid modification. Cysteine 23 carries the S-diacylglycerol cysteine lipid modification. Helical transmembrane passes span 35 to 55, 60 to 80, 130 to 150, 170 to 190, and 208 to 228; these read FWDG…SNLF, GLGI…LMIF, ASML…QAIW, PYYV…WLAM, and PVII…YWVI. Residues 251–266 are compositionally biased toward basic and acidic residues; that stretch reads EAKKQAERDRKRTLEK. The tract at residues 251-277 is disordered; that stretch reads EAKKQAERDRKRTLEKARKRAIRNHKR. Over residues 267 to 277 the composition is skewed to basic residues; the sequence is ARKRAIRNHKR.

Belongs to the OXA1/ALB3/YidC family. Type 2 subfamily.

The protein localises to the cell membrane. Functionally, required for the insertion and/or proper folding and/or complex formation of integral membrane proteins into the membrane. Involved in integration of membrane proteins that insert both dependently and independently of the Sec translocase complex, as well as at least some lipoproteins. In Lactiplantibacillus plantarum (strain ATCC BAA-793 / NCIMB 8826 / WCFS1) (Lactobacillus plantarum), this protein is Membrane protein insertase YidC 2.